Consider the following 690-residue polypeptide: Quinohemoprotein alcohol dehydrogenase ADH IIB (690 aa).

An N-terminal signal peptide occupies residues 1 to 22 (MKKPLRTSLLMLCLATPLAALA). Glutamate 81 serves as a coordination point for pyrroloquinoline quinone. A disulfide bridge links cysteine 127 with cysteine 128. Residues arginine 133, threonine 177, and 193-194 (GA) each bind pyrroloquinoline quinone. Glutamate 195 contributes to the Ca(2+) binding site. Threonine 252 contacts pyrroloquinoline quinone. Residues asparagine 272 and aspartate 317 each contribute to the Ca(2+) site. Aspartate 317 acts as the Proton acceptor in catalysis. Pyrroloquinoline quinone is bound by residues lysine 344, 404-405 (NW), and valine 547. In terms of domain architecture, Cytochrome c spans 600 to 678 (EQVQAGKQLY…QIKLYVMSRE (79 aa)). 4 residues coordinate heme c: cysteine 613, cysteine 616, histidine 617, and methionine 655.

Belongs to the bacterial PQQ dehydrogenase family. In terms of assembly, monomer. The cofactor is pyrroloquinoline quinone. It depends on Ca(2+) as a cofactor. Heme c is required as a cofactor.

The protein resides in the periplasm. The enzyme catalyses 2 oxidized [azurin] + a primary alcohol = 2 reduced [azurin] + an aldehyde + 2 H(+). Inhibited by 10 mM 1-butanol. Catalyzes the dye-linked oxidation of primary alcohols to the corresponding aldehydes and the (subsequent) oxidation of the aldehydes to carboxylic acids. Exhibits activity with longer mono-alcohols (C-4 to C-7) but not with methanol or glycerol. Reacts with 1,2-propanediol and 1,3-propanediol but not with sugar alcohols such as D-sorbitol. This Pseudomonas putida (Arthrobacter siderocapsulatus) protein is Quinohemoprotein alcohol dehydrogenase ADH IIB.